Reading from the N-terminus, the 574-residue chain is Penicillin-binding protein activator LpoA (574 aa).

Positions 1-25 (MTILLQRAKFKKRLMPILFPLMLAG) are cleaved as a signal peptide. A lipid anchor (N-palmitoyl cysteine) is attached at Cys-26. Residue Cys-26 is the site of S-diacylglycerol cysteine attachment.

This sequence belongs to the LpoA family. In terms of assembly, interacts with PBP1a.

The protein localises to the cell outer membrane. Functionally, regulator of peptidoglycan synthesis that is essential for the function of penicillin-binding protein 1A (PBP1a). In Mannheimia succiniciproducens (strain KCTC 0769BP / MBEL55E), this protein is Penicillin-binding protein activator LpoA.